Consider the following 196-residue polypeptide: Nucleoside triphosphate pyrophosphatase (196 aa).

The active-site Proton acceptor is Asp-73.

The protein belongs to the Maf family. A divalent metal cation serves as cofactor.

The protein localises to the cytoplasm. The enzyme catalyses a ribonucleoside 5'-triphosphate + H2O = a ribonucleoside 5'-phosphate + diphosphate + H(+). It catalyses the reaction a 2'-deoxyribonucleoside 5'-triphosphate + H2O = a 2'-deoxyribonucleoside 5'-phosphate + diphosphate + H(+). Nucleoside triphosphate pyrophosphatase. May have a dual role in cell division arrest and in preventing the incorporation of modified nucleotides into cellular nucleic acids. The polypeptide is Nucleoside triphosphate pyrophosphatase (Anaplasma marginale (strain St. Maries)).